The chain runs to 1447 residues: Netrin receptor DCC (1447 aa).

The first 25 residues, 1-25, serve as a signal peptide directing secretion; that stretch reads MENSLRCVWVPKLAFVLFGASLFSA. Ig-like C2-type domains are found at residues 26–135, 139–229, 234–326, and 331–416; these read HLQV…AKVA, PLRF…AEVR, PGLH…AELT, and PWFL…AQLI. Over 26–1097 the chain is Extracellular; that stretch reads HLQVTGFQIK…GSVTPQKNSN (1072 aa). 3 disulfide bridges follow: C61-C117, C161-C212, and C261-C310. N-linked (GlcNAc...) asparagine glycosylation occurs at N94. Residues N299 and N318 are each glycosylated (N-linked (GlcNAc...) asparagine). An intrachain disulfide couples C352 to C400. 6 Fibronectin type-III domains span residues 431-524, 530-620, 625-718, 728-821, 846-942, and 947-1044; these read APRD…TQPE, PVEN…TLSD, PPQN…TPEN, QPSS…TDPT, PPVG…TYEA, and APKD…TLKV. An N-linked (GlcNAc...) asparagine glycan is attached at N478. Residues N628 and N702 are each glycosylated (N-linked (GlcNAc...) asparagine). Residues 1098 to 1122 traverse the membrane as a helical segment; it reads LLVIIVVTVGVITVLVVVIVAVICT. The Cytoplasmic portion of the chain corresponds to 1123–1447; it reads RRSSAQQRKK…QLNAITGSAF (325 aa). 2 disordered regions span residues 1126–1152 and 1165–1222; these read SAQQ…RPPD and IEKP…TLER. Positions 1129-1143 are enriched in basic residues; it reads QRKKRATHSAGKRKG. S1178 bears the Phosphoserine; by MAPK1 mark. Over residues 1179-1221 the composition is skewed to polar residues; that stretch reads PIQSCQDLTPVSHSQSETQLGSKSTSHSGQDTEEAGSSMSTLE. T1187 is modified (phosphothreonine; by MAPK1). Position 1267 is a phosphoserine; by MAPK1 (S1267). 2 disordered regions span residues 1288 to 1330 and 1394 to 1419; these read SVDR…PSRT and LLPV…SANV. Positions 1297–1310 are enriched in polar residues; that stretch reads RSQSVSEGPTTQQP. Positions 1432–1439 are interaction with MYO10; that stretch reads LEGLMKQL.

Belongs to the immunoglobulin superfamily. DCC family. Interacts with the cytoplasmic part of UNC5A, UNC5B, UNC5C and probably UNC5D. Interacts with DSCAM. Interacts with PTK2/FAK1 and MAPK1. Interacts with NTN1. Interacts with MYO10. Interacts with CBLN4; this interaction can be competed by NTN1. Interacts with SIAH1 and SIAH2. In terms of processing, ubiquitinated; mediated by SIAH1 or SIAH2 and leading to its subsequent proteasomal degradation. As to expression, found in axons of the central and peripheral nervous system and in differentiated cell types of the intestine. Not expressed in colorectal tumor cells that lost their capacity to differentiate into mucus producing cells.

The protein resides in the membrane. Functionally, receptor for netrin required for axon guidance. Mediates axon attraction of neuronal growth cones in the developing nervous system upon ligand binding. Its association with UNC5 proteins may trigger signaling for axon repulsion. It also acts as a dependence receptor required for apoptosis induction when not associated with netrin ligand. Implicated as a tumor suppressor gene. This Homo sapiens (Human) protein is Netrin receptor DCC (DCC).